A 378-amino-acid chain; its full sequence is 2-aminoethylphosphonate--pyruvate transaminase 1 (378 aa).

Lysine 194 is subject to N6-(pyridoxal phosphate)lysine.

This sequence belongs to the class-V pyridoxal-phosphate-dependent aminotransferase family. PhnW subfamily. As to quaternary structure, homodimer. It depends on pyridoxal 5'-phosphate as a cofactor.

The catalysed reaction is (2-aminoethyl)phosphonate + pyruvate = phosphonoacetaldehyde + L-alanine. Its function is as follows. Involved in phosphonate degradation. This is 2-aminoethylphosphonate--pyruvate transaminase 1 from Cupriavidus pinatubonensis (strain JMP 134 / LMG 1197) (Cupriavidus necator (strain JMP 134)).